Reading from the N-terminus, the 729-residue chain is Serine/threonine-protein kinase TBK1 (729 aa).

The Protein kinase domain occupies 9-310; that stretch reads WLLSDILGQG…ETSDVLHRMV (302 aa). 15–23 provides a ligand contact to ATP; that stretch reads LGQGATANV. Lys-30 participates in a covalent cross-link: Glycyl lysine isopeptide (Lys-Gly) (interchain with G-Cter in ubiquitin). ATP is bound at residue Lys-38. Asp-135 acts as the Proton acceptor in catalysis. The residue at position 172 (Ser-172) is a Phosphoserine; by autocatalysis and IKKB. A Ubiquitin-like domain is found at 309-385; that stretch reads MVIHVFSLQH…ENPIFVTSRE (77 aa). A Glycyl lysine isopeptide (Lys-Gly) (interchain with G-Cter in ubiquitin) cross-link involves residue Lys-401. Coiled-coil stretches lie at residues 407–657 and 658–713; these read DLDG…LQET and LPQK…ILER. The segment at 621-729 is interaction with AZI2, TANK and TBKBP1; that stretch reads RKMLHLRKQL…DGGLRNVDCL (109 aa). Lys-670 is covalently cross-linked (Glycyl lysine isopeptide (Lys-Gly) (interchain with G-Cter in ubiquitin)). Residue Ser-716 is modified to Phosphoserine.

It belongs to the protein kinase superfamily. Ser/Thr protein kinase family. I-kappa-B kinase subfamily. As to quaternary structure, homodimer. Interacts with DDX3X, TIRAP and TRAF2. Part of a ternary complex consisting of TANK, TRAF2 and TBK1. Interacts with AZI2, TANK and TBKBP1; these interactions are mutually exclusive and mediate TBK1 activation. Interacts with GSK3B; this interaction promotes TBK1 self-association and autophosphorylation. Interacts with SIKE1; SIKE1 is associated with TBK1 under physiological condition and dissociated from TBK1 upon viral infection or TLR3 stimulation. Interacts with IRF3, leading to IRF3 phosphorylation. Interacts with RIGI. Interacts with CYLD. Interacts with OPTN and TRAF3. Interacts with SRC. Interacts with the exocyst complex subunit SEC5/EXOC2; this interaction is sufficient to trigger TBK1 activity. Interacts with STING1, leading to STING1 phosphorylation. Interacts with IFIT3 (via N-terminus). Interacts with MAVS; interaction only takes place in the presence of IFIT3 and leads to MAVS phosphorylation. Interacts (via protein kinase domain) with TTLL12 (via TTL domain); the interaction prevents MAVS binding to TBK1. Interacts with TICAM1; this interaction is enhanced in the presence of WDFY1 and leads to TICAM1 phosphorylation. Interacts with TRIM26. Interacts with TRIM23. Interacts with TTC4 and IKBKE. Interacts with HNRNPA2B1. Interacts with DDX3X. Interacts with TRIM14. Interacts with CEP170; efficient complex formation may be dependent on the presence of CCDC61. Interacts with TRAF3IP3. Interacts with HSP90AA1; the interaction mediates TBK1 association with TOMM70. Interacts with TAX1BP1. Interacts with kinase IKBKB; the complex interacts with STAT1, leading to phosphorylation of STAT1 on 'Thr-748' by IKBKB. Interacts with ICOS; this interaction is critical for the maturation of T follicular regulatory cells. Interacts with RNF144B; this interaction prevents TBK1 phosphorylation and subsequent activation. Interacts with ASB8; this interaction promotes TBK1 proteasomal degradation. Autophosphorylation at Ser-172 activates the kinase, and is an essential step for virus-triggered signaling. Phosphorylated by IKBKB/IKKB at Ser-172. Phosphorylation requires homodimerization and ubiquitination at Lys-30 and Lys-401. Dephosphorylated at Ser-172 by PPM1B and this negatively regulates its role in mediating antiviral response. In terms of processing, 'Lys-63'-linked polyubiquitination by MIB1 after RNA virus infection, or by NRDP1 after LPS stimulation at Lys-30 and Lys-401, participates in kinase activation. 'Lys-48'-linked polyubiquitination at Lys-670 by DTX4 leads to proteasomal degradation. 'Lys-48'-linked polyubiquitination by TRAIP also leads to proteasomal degradation. 'Lys-48'-linked polyubiquitination by TRAF7; leading to proteasomal degradation. 'Lys-63'-linked polyubiquitination by RNF128 at Lys-30 and Lys-401 leads to the activation of antiviral responses. 'Lys-48'-linked polyubiquitination after 'lys-33'-linked deubiquitination by USP38 promotes TBK1 degradation.

Its subcellular location is the cytoplasm. It carries out the reaction L-seryl-[protein] + ATP = O-phospho-L-seryl-[protein] + ADP + H(+). The catalysed reaction is L-threonyl-[protein] + ATP = O-phospho-L-threonyl-[protein] + ADP + H(+). With respect to regulation, kinase activity is inhibited competitively by amlexanox. Serine/threonine kinase that plays an essential role in regulating inflammatory responses to foreign agents. Following activation of toll-like receptors by viral or bacterial components, associates with TRAF3 and TANK and phosphorylates interferon regulatory factors (IRFs) IRF3 and IRF7 as well as DDX3X. This activity allows subsequent homodimerization and nuclear translocation of the IRFs leading to transcriptional activation of pro-inflammatory and antiviral genes including IFNA and IFNB. In order to establish such an antiviral state, TBK1 form several different complexes whose composition depends on the type of cell and cellular stimuli. Thus, several scaffolding molecules including FADD, TRADD, MAVS, AZI2, TANK or TBKBP1/SINTBAD can be recruited to the TBK1-containing-complexes. Plays a key role in IRF3 activation: acts by first phosphorylating innate adapter proteins MAVS, STING1 and TICAM1 on their pLxIS motif, leading to recruitment of IRF3, thereby licensing IRF3 for phosphorylation by TBK1. Under particular conditions, functions as a NF-kappa-B effector by phosphorylating NF-kappa-B inhibitor alpha/NFKBIA, IKBKB or RELA to translocate NF-Kappa-B to the nucleus. Restricts bacterial proliferation by phosphorylating the autophagy receptor OPTN/Optineurin on 'Ser-177', thus enhancing LC3 binding affinity and antibacterial autophagy. Phosphorylates SMCR8 component of the C9orf72-SMCR8 complex, promoting autophagosome maturation. Phosphorylates ATG8 proteins MAP1LC3C and GABARAPL2, thereby preventing their delipidation and premature removal from nascent autophagosomes. Seems to play a role in energy balance regulation by sustaining a state of chronic, low-grade inflammation in obesity, which leads to a negative impact on insulin sensitivity. Acts both as a positive and negative regulator of the mTORC1 complex, depending on the context: activates mTORC1 in response to growth factors by catalyzing phosphorylation of MTOR, while it limits the mTORC1 complex by promoting phosphorylation of RPTOR. Acts as a positive regulator of the mTORC2 complex by mediating phosphorylation of MTOR, leading to increased phosphorylation and activation of AKT1. Phosphorylates and activates AKT1. Involved in the regulation of TNF-induced RIPK1-mediated cell death, probably acting via CYLD phosphorylation that in turn controls RIPK1 ubiquitination status. Also participates in the differentiation of T follicular regulatory cells together with the receptor ICOS. This chain is Serine/threonine-protein kinase TBK1, found in Mus musculus (Mouse).